We begin with the raw amino-acid sequence, 179 residues long: Large ribosomal subunit protein uL5 (179 aa).

Belongs to the universal ribosomal protein uL5 family. In terms of assembly, part of the 50S ribosomal subunit; part of the 5S rRNA/L5/L18/L25 subcomplex. Contacts the 5S rRNA and the P site tRNA. Forms a bridge to the 30S subunit in the 70S ribosome.

This is one of the proteins that bind and probably mediate the attachment of the 5S RNA into the large ribosomal subunit, where it forms part of the central protuberance. In the 70S ribosome it contacts protein S13 of the 30S subunit (bridge B1b), connecting the 2 subunits; this bridge is implicated in subunit movement. Contacts the P site tRNA; the 5S rRNA and some of its associated proteins might help stabilize positioning of ribosome-bound tRNAs. This is Large ribosomal subunit protein uL5 from Yersinia enterocolitica serotype O:8 / biotype 1B (strain NCTC 13174 / 8081).